Consider the following 456-residue polypeptide: Amino acid transporter AVT6B (456 aa).

The next 11 helical transmembrane spans lie at 37-57, 58-78, 118-138, 164-184, 191-211, 236-256, 273-293, 328-348, 365-385, 388-408, and 423-443; these read FSGA…MALP, ATMK…MAFL, ILVS…DVLA, TFVL…FKRI, SAIS…ITII, LFTV…VHSI, ALAM…LLFG, LMLV…GLIF, SITA…PSIW, FQFT…AAVI, and IAIC…YSDA.

This sequence belongs to the amino acid/polyamine transporter 2 family. Amino acid/auxin permease (AAAP) (TC 2.A.18.6) subfamily.

Its subcellular location is the membrane. This chain is Amino acid transporter AVT6B, found in Arabidopsis thaliana (Mouse-ear cress).